The sequence spans 858 residues: Elongation factor 2 (858 aa).

Residues alanine 17–valine 362 form the tr-type G domain. Alanine 26–serine 33 contributes to the GTP binding site. Residue threonine 54 is modified to Phosphothreonine. The residue at position 57 (threonine 57) is a Phosphothreonine; by EEF2K. The residue at position 59 (threonine 59) is a Phosphothreonine. Lysine 152 carries the N6-succinyllysine modification. GTP contacts are provided by residues asparagine 158–aspartate 161 and serine 216–leucine 218. At lysine 235 the chain carries N6-acetyllysine. Lysine 239 carries the N6-acetyllysine; alternate modification. Lysine 239 is covalently cross-linked (Glycyl lysine isopeptide (Lys-Gly) (interchain with G-Cter in SUMO1); alternate). A Phosphotyrosine; by CSK modification is found at tyrosine 265. Lysine 272 carries the N6-acetyllysine; alternate modification. Lysine 272 carries the N6-succinyllysine; alternate modification. Lysine 275 carries the N6-acetyllysine modification. A Glycyl lysine isopeptide (Lys-Gly) (interchain with G-Cter in SUMO) cross-link involves residue lysine 322. Serine 325 bears the Phosphoserine mark. Tyrosine 373 is subject to Phosphotyrosine; by CSK. The residue at position 435 (threonine 435) is a Phosphothreonine. An N6-acetyllysine mark is found at lysine 439 and lysine 445. Serine 502 is modified (phosphoserine). Lysine 525 carries the post-translational modification N6,N6,N6-trimethyllysine; by EEF2KMT. A Glycyl lysine isopeptide (Lys-Gly) (interchain with G-Cter in SUMO) cross-link involves residue lysine 529. Lysine 572 is modified (N6-succinyllysine). A Phosphoserine; by CDK2 modification is found at serine 595. Lysine 619 is modified (N6-acetyllysine). Histidine 715 bears the Diphthamide mark.

The protein belongs to the TRAFAC class translation factor GTPase superfamily. Classic translation factor GTPase family. EF-G/EF-2 subfamily. In terms of assembly, binds to 80S ribosomes. Actively translating ribosomes show mutually exclusive binding of eIF5a (EIF5A or EIF5A2) and EEF2/eEF2. Interacts with SERBP1; interaction sequesters EEF2/eEF2 at the A-site of the ribosome, thereby blocking the interaction sites of the mRNA-tRNA complex, promoting ribosome stabilization and hibernation. Interacts with HABP4; interaction takes place at the A-site of hibernating ribosomes and promotes ribosome stabilization. Component of the mRNA surveillance SURF complex, at least composed of ERF1, ERF3 (ERF3A or ERF3B), EEF2, UPF1/RENT1, SMG1, SMG8 and SMG9. Interacts with RBPMS2. Phosphorylation by EF-2 kinase completely inactivates EF-2; it requires prior phosphorylation by CDK2 at Ser-595 during mitotic prometaphase. Phosphorylation by CSK promotes SUMOylation, proteolytic cleavage, and nuclear translocation if the C-terminal fragment. In terms of processing, diphthamide is 2-[3-carboxyamido-3-(trimethyl-ammonio)propyl]histidine. Post-translationally, ISGylated. Proteolytically processed at two sites following phosphorylation by CSK. In terms of processing, SUMOylated following phosphorylation by CSK, promotes proteolytic cleavage.

It localises to the cytoplasm. The protein localises to the nucleus. It carries out the reaction GTP + H2O = GDP + phosphate + H(+). In terms of biological role, catalyzes the GTP-dependent ribosomal translocation step during translation elongation. During this step, the ribosome changes from the pre-translocational (PRE) to the post-translocational (POST) state as the newly formed A-site-bound peptidyl-tRNA and P-site-bound deacylated tRNA move to the P and E sites, respectively. Catalyzes the coordinated movement of the two tRNA molecules, the mRNA and conformational changes in the ribosome. The chain is Elongation factor 2 (EEF2) from Bos taurus (Bovine).